The chain runs to 393 residues: Putative competence-damage inducible protein (393 aa).

Belongs to the CinA family.

This Streptococcus suis (strain 98HAH33) protein is Putative competence-damage inducible protein.